A 40-amino-acid chain; its full sequence is uncharacterized protein (40 aa).

The chain crosses the membrane as a helical span at residues 20–37 (TYLYWTAVTAAYLTYLTI).

The protein localises to the membrane. This is an uncharacterized protein from Archaeoglobus fulgidus (strain ATCC 49558 / DSM 4304 / JCM 9628 / NBRC 100126 / VC-16).